The chain runs to 362 residues: Aminomethyltransferase (362 aa).

It belongs to the GcvT family. The glycine cleavage system is composed of four proteins: P, T, L and H.

It carries out the reaction N(6)-[(R)-S(8)-aminomethyldihydrolipoyl]-L-lysyl-[protein] + (6S)-5,6,7,8-tetrahydrofolate = N(6)-[(R)-dihydrolipoyl]-L-lysyl-[protein] + (6R)-5,10-methylene-5,6,7,8-tetrahydrofolate + NH4(+). The glycine cleavage system catalyzes the degradation of glycine. The protein is Aminomethyltransferase of Listeria welshimeri serovar 6b (strain ATCC 35897 / DSM 20650 / CCUG 15529 / CIP 8149 / NCTC 11857 / SLCC 5334 / V8).